The sequence spans 367 residues: Dual-specificity RNA methyltransferase RlmN (367 aa).

Glutamate 93 acts as the Proton acceptor in catalysis. The 235-residue stretch at 99–333 folds into the Radical SAM core domain; the sequence is EEDRATLCVS…VIVRKTRGDD (235 aa). An intrachain disulfide couples cysteine 106 to cysteine 338. Residues cysteine 113, cysteine 117, and cysteine 120 each contribute to the [4Fe-4S] cluster site. Residues 162-163, serine 194, 216-218, and asparagine 295 contribute to the S-adenosyl-L-methionine site; these read GE and SLH. Cysteine 338 (S-methylcysteine intermediate) is an active-site residue.

This sequence belongs to the radical SAM superfamily. RlmN family. [4Fe-4S] cluster is required as a cofactor.

It localises to the cytoplasm. The enzyme catalyses adenosine(2503) in 23S rRNA + 2 reduced [2Fe-2S]-[ferredoxin] + 2 S-adenosyl-L-methionine = 2-methyladenosine(2503) in 23S rRNA + 5'-deoxyadenosine + L-methionine + 2 oxidized [2Fe-2S]-[ferredoxin] + S-adenosyl-L-homocysteine. It carries out the reaction adenosine(37) in tRNA + 2 reduced [2Fe-2S]-[ferredoxin] + 2 S-adenosyl-L-methionine = 2-methyladenosine(37) in tRNA + 5'-deoxyadenosine + L-methionine + 2 oxidized [2Fe-2S]-[ferredoxin] + S-adenosyl-L-homocysteine. In terms of biological role, specifically methylates position 2 of adenine 2503 in 23S rRNA and position 2 of adenine 37 in tRNAs. m2A2503 modification seems to play a crucial role in the proofreading step occurring at the peptidyl transferase center and thus would serve to optimize ribosomal fidelity. In Aeromonas hydrophila subsp. hydrophila (strain ATCC 7966 / DSM 30187 / BCRC 13018 / CCUG 14551 / JCM 1027 / KCTC 2358 / NCIMB 9240 / NCTC 8049), this protein is Dual-specificity RNA methyltransferase RlmN.